Consider the following 141-residue polypeptide: HTH-type transcriptional repressor NsrR (141 aa).

Residues 2-129 enclose the HTH rrf2-type domain; that stretch reads QLTSFTDYGL…DNYTLADMVK (128 aa). Residues 28–51 constitute a DNA-binding region (H-T-H motif); sequence ISQVTEVYGVSRNHMVKIINQLSR. Residues Cys-91, Cys-96, and Cys-102 each contribute to the [2Fe-2S] cluster site.

It depends on [2Fe-2S] cluster as a cofactor.

Its function is as follows. Nitric oxide-sensitive repressor of genes involved in protecting the cell against nitrosative stress. May require iron for activity. This chain is HTH-type transcriptional repressor NsrR, found in Yersinia pseudotuberculosis serotype O:1b (strain IP 31758).